Reading from the N-terminus, the 174-residue chain is Histone deacetylase complex subunit SAP30 homolog (174 aa).

The segment at 22–70 adopts an Atypical zinc-finger fold; it reads CCLLDDGERCRKQAGNASYSKRIQKTVTQRRLKLSIDSHARHIYICDFH.

Belongs to the SAP30 family. Component of the class 1 Sin3-histone deacetylase complex (HDAC).

The protein resides in the nucleus. In terms of biological role, required for the function of the class 1 Sin3-histone deacetylase complex (HDAC). The protein is Histone deacetylase complex subunit SAP30 homolog of Anopheles gambiae (African malaria mosquito).